A 140-amino-acid chain; its full sequence is 3-hydroxyacyl-[acyl-carrier-protein] dehydratase FabZ (140 aa).

Histidine 47 is a catalytic residue.

Belongs to the thioester dehydratase family. FabZ subfamily.

The protein resides in the cytoplasm. It catalyses the reaction a (3R)-hydroxyacyl-[ACP] = a (2E)-enoyl-[ACP] + H2O. Involved in unsaturated fatty acids biosynthesis. Catalyzes the dehydration of short chain beta-hydroxyacyl-ACPs and long chain saturated and unsaturated beta-hydroxyacyl-ACPs. This Streptococcus pyogenes serotype M49 (strain NZ131) protein is 3-hydroxyacyl-[acyl-carrier-protein] dehydratase FabZ.